The sequence spans 345 residues: NADH-quinone oxidoreductase subunit H (345 aa).

8 helical membrane-spanning segments follow: residues Ile-14–Val-34, Phe-84–Phe-104, Val-115–Gly-135, Ile-161–Val-181, Gly-187–Ile-207, Tyr-248–Ser-268, Val-277–Ile-297, and Leu-309–Ala-329.

It belongs to the complex I subunit 1 family. As to quaternary structure, NDH-1 is composed of 14 different subunits. Subunits NuoA, H, J, K, L, M, N constitute the membrane sector of the complex.

The protein localises to the cell inner membrane. The enzyme catalyses a quinone + NADH + 5 H(+)(in) = a quinol + NAD(+) + 4 H(+)(out). In terms of biological role, NDH-1 shuttles electrons from NADH, via FMN and iron-sulfur (Fe-S) centers, to quinones in the respiratory chain. The immediate electron acceptor for the enzyme in this species is believed to be ubiquinone. Couples the redox reaction to proton translocation (for every two electrons transferred, four hydrogen ions are translocated across the cytoplasmic membrane), and thus conserves the redox energy in a proton gradient. This subunit may bind ubiquinone. This is NADH-quinone oxidoreductase subunit H from Ruegeria pomeroyi (strain ATCC 700808 / DSM 15171 / DSS-3) (Silicibacter pomeroyi).